A 442-amino-acid chain; its full sequence is tRNA-2-methylthio-N(6)-dimethylallyladenosine synthase (442 aa).

The region spanning 3 to 120 (KKLYIETHGC…LPEMIDAARI (118 aa)) is the MTTase N-terminal domain. Residues C12, C49, C83, C157, C161, and C164 each coordinate [4Fe-4S] cluster. The Radical SAM core domain occupies 143–375 (RIDGPSAYVS…QHRLNQQGFE (233 aa)). The TRAM domain occupies 378–442 (RQMVGSVQRI…PHSLRGSLIQ (65 aa)).

Belongs to the methylthiotransferase family. MiaB subfamily. Monomer. Requires [4Fe-4S] cluster as cofactor.

Its subcellular location is the cytoplasm. It carries out the reaction N(6)-dimethylallyladenosine(37) in tRNA + (sulfur carrier)-SH + AH2 + 2 S-adenosyl-L-methionine = 2-methylsulfanyl-N(6)-dimethylallyladenosine(37) in tRNA + (sulfur carrier)-H + 5'-deoxyadenosine + L-methionine + A + S-adenosyl-L-homocysteine + 2 H(+). In terms of biological role, catalyzes the methylthiolation of N6-(dimethylallyl)adenosine (i(6)A), leading to the formation of 2-methylthio-N6-(dimethylallyl)adenosine (ms(2)i(6)A) at position 37 in tRNAs that read codons beginning with uridine. The chain is tRNA-2-methylthio-N(6)-dimethylallyladenosine synthase from Pseudomonas fluorescens (strain Pf0-1).